The chain runs to 325 residues: GMP reductase (325 aa).

The active-site Thioimidate intermediate is Cys-174. 203-226 (MIADGGIRTHGDIAKSIRFGASMV) is a binding site for NADP(+).

It belongs to the IMPDH/GMPR family. GuaC type 2 subfamily.

It carries out the reaction IMP + NH4(+) + NADP(+) = GMP + NADPH + 2 H(+). Its function is as follows. Catalyzes the irreversible NADPH-dependent deamination of GMP to IMP. It functions in the conversion of nucleobase, nucleoside and nucleotide derivatives of G to A nucleotides, and in maintaining the intracellular balance of A and G nucleotides. The chain is GMP reductase from Staphylococcus carnosus (strain TM300).